The chain runs to 197 residues: Imidazoleglycerol-phosphate dehydratase (197 aa).

Belongs to the imidazoleglycerol-phosphate dehydratase family.

Its subcellular location is the cytoplasm. The enzyme catalyses D-erythro-1-(imidazol-4-yl)glycerol 3-phosphate = 3-(imidazol-4-yl)-2-oxopropyl phosphate + H2O. The protein operates within amino-acid biosynthesis; L-histidine biosynthesis; L-histidine from 5-phospho-alpha-D-ribose 1-diphosphate: step 6/9. The chain is Imidazoleglycerol-phosphate dehydratase from Rhodopseudomonas palustris (strain ATCC BAA-98 / CGA009).